A 159-amino-acid polypeptide reads, in one-letter code: Probable NADH dehydrogenase [ubiquinone] 1 alpha subcomplex subunit 12 (159 aa).

The protein belongs to the complex I NDUFA12 subunit family. Complex I is composed of at least 49 different subunits.

It localises to the mitochondrion inner membrane. In terms of biological role, accessory subunit of the mitochondrial membrane respiratory chain NADH dehydrogenase (Complex I), that is believed not to be involved in catalysis. Complex I functions in the transfer of electrons from NADH to the respiratory chain. The immediate electron acceptor for the enzyme is believed to be ubiquinone. The sequence is that of Probable NADH dehydrogenase [ubiquinone] 1 alpha subcomplex subunit 12 from Arabidopsis thaliana (Mouse-ear cress).